Consider the following 361-residue polypeptide: 3-dehydroquinate synthase (361 aa).

The protein belongs to the archaeal-type DHQ synthase family.

It catalyses the reaction 2-amino-2,3,7-trideoxy-D-lyxo-hept-6-ulosonate + NAD(+) + H2O = 3-dehydroquinate + NH4(+) + NADH + H(+). In terms of biological role, catalyzes the oxidative deamination and cyclization of 2-amino-3,7-dideoxy-D-threo-hept-6-ulosonic acid (ADH) to yield 3-dehydroquinate (DHQ), which is fed into the canonical shikimic pathway of aromatic amino acid biosynthesis. This is 3-dehydroquinate synthase from Methanococcus vannielii (strain ATCC 35089 / DSM 1224 / JCM 13029 / OCM 148 / SB).